Reading from the N-terminus, the 130-residue chain is Sigma-w pathway protein YsdB (130 aa).

A helical transmembrane segment spans residues 2–22 (FVMVLRIILLALFAYCIYAVV).

The protein resides in the membrane. Its function is as follows. May mediate a negative feedback loop that down-regulates the expression of the sigma-W regulon following the activation of sigma-W in response to conditions of cell envelope stress. Might interact with and inhibit the activity of the protease PrsW, or could bind to the anti-sigma-W factor RsiW and thereby protect it from PrsW-mediated cleavage. The chain is Sigma-w pathway protein YsdB (ysdB) from Bacillus subtilis (strain 168).